We begin with the raw amino-acid sequence, 451 residues long: Phosphoglucosamine mutase (451 aa).

The active-site Phosphoserine intermediate is the Ser107. 4 residues coordinate Mg(2+): Ser107, Asp246, Asp248, and Asp250. Ser107 is subject to Phosphoserine.

Belongs to the phosphohexose mutase family. Requires Mg(2+) as cofactor. In terms of processing, activated by phosphorylation.

It catalyses the reaction alpha-D-glucosamine 1-phosphate = D-glucosamine 6-phosphate. Catalyzes the conversion of glucosamine-6-phosphate to glucosamine-1-phosphate. The polypeptide is Phosphoglucosamine mutase (Burkholderia vietnamiensis (strain G4 / LMG 22486) (Burkholderia cepacia (strain R1808))).